Here is a 65-residue protein sequence, read N- to C-terminus: Large ribosomal subunit protein uL30 (65 aa).

This sequence belongs to the universal ribosomal protein uL30 family. In terms of assembly, part of the 50S ribosomal subunit.

The sequence is that of Large ribosomal subunit protein uL30 from Aster yellows witches'-broom phytoplasma (strain AYWB).